The following is a 239-amino-acid chain: Ribosomal RNA small subunit methyltransferase G (239 aa).

S-adenosyl-L-methionine is bound by residues Gly78, Phe83, 129-130, and Arg148; that span reads AE.

It belongs to the methyltransferase superfamily. RNA methyltransferase RsmG family.

The protein resides in the cytoplasm. Specifically methylates the N7 position of a guanine in 16S rRNA. This is Ribosomal RNA small subunit methyltransferase G from Clostridium botulinum (strain ATCC 19397 / Type A).